The following is a 648-amino-acid chain: Serine/threonine-protein kinase DCLK3 (648 aa).

Disordered regions lie at residues 86–127 (DDRA…HLGV) and 150–345 (QSLE…PRPM). Basic and acidic residues-rich tracts occupy residues 98–127 (GKWE…HLGV), 213–234 (ELRR…DQES), 255–266 (EGLREVKKDTRP), 277–303 (LREH…EKKP), and 312–338 (TLRD…ERPS). The region spanning 356-613 (YETGRVIGDG…AHQVLQHPWI (258 aa)) is the Protein kinase domain. ATP is bound by residues 362-370 (IGDGNFAVV) and Lys-385. Asp-477 (proton acceptor) is an active-site residue. The disordered stretch occupies residues 628–648 (VSPSSEGHFRSQHKRVVEQVS).

The protein belongs to the protein kinase superfamily. CAMK Ser/Thr protein kinase family. CaMK subfamily.

It localises to the cytoplasm. Its subcellular location is the nucleus. It catalyses the reaction L-seryl-[protein] + ATP = O-phospho-L-seryl-[protein] + ADP + H(+). The catalysed reaction is L-threonyl-[protein] + ATP = O-phospho-L-threonyl-[protein] + ADP + H(+). The polypeptide is Serine/threonine-protein kinase DCLK3 (DCLK3) (Homo sapiens (Human)).